The following is a 448-amino-acid chain: Probable glycine dehydrogenase (decarboxylating) subunit 1 (448 aa).

It belongs to the GcvP family. N-terminal subunit subfamily. In terms of assembly, the glycine cleavage system is composed of four proteins: P, T, L and H. In this organism, the P 'protein' is a heterodimer of two subunits.

It carries out the reaction N(6)-[(R)-lipoyl]-L-lysyl-[glycine-cleavage complex H protein] + glycine + H(+) = N(6)-[(R)-S(8)-aminomethyldihydrolipoyl]-L-lysyl-[glycine-cleavage complex H protein] + CO2. Functionally, the glycine cleavage system catalyzes the degradation of glycine. The P protein binds the alpha-amino group of glycine through its pyridoxal phosphate cofactor; CO(2) is released and the remaining methylamine moiety is then transferred to the lipoamide cofactor of the H protein. This Pyrococcus furiosus (strain ATCC 43587 / DSM 3638 / JCM 8422 / Vc1) protein is Probable glycine dehydrogenase (decarboxylating) subunit 1.